The chain runs to 218 residues: Putative copper transporter crmD (218 aa).

2 helical membrane passes run 37 to 57 (YSLT…LGVL) and 176 to 196 (MLAV…GIVV).

This sequence belongs to the copper transporter (Ctr) (TC 1.A.56) family. SLC31A subfamily.

The protein localises to the membrane. It carries out the reaction Cu(2+)(in) = Cu(2+)(out). In terms of biological role, putative copper transporter; part of the crm gene cluster that mediates the biosynthesis of a yet unidentified copper-responsive metabolite. Probably involved in the transport of copper, even if it does not act as a major copper transporter. In contrast to crmA, is not involved in the biosynthesis of fumivalines or fumicicolins. This Aspergillus fumigatus (strain ATCC MYA-4609 / CBS 101355 / FGSC A1100 / Af293) (Neosartorya fumigata) protein is Putative copper transporter crmD.